A 204-amino-acid chain; its full sequence is Small ribosomal subunit protein uS4 (204 aa).

The S4 RNA-binding domain maps to 93 to 156 (SRLSSVLYHS…AKIPVIVEAV (64 aa)).

Belongs to the universal ribosomal protein uS4 family. In terms of assembly, part of the 30S ribosomal subunit. Contacts protein S5. The interaction surface between S4 and S5 is involved in control of translational fidelity.

In terms of biological role, one of the primary rRNA binding proteins, it binds directly to 16S rRNA where it nucleates assembly of the body of the 30S subunit. Its function is as follows. With S5 and S12 plays an important role in translational accuracy. This chain is Small ribosomal subunit protein uS4, found in Wolbachia sp. subsp. Brugia malayi (strain TRS).